A 218-amino-acid polypeptide reads, in one-letter code: Putative NAD(P)H nitroreductase SH0546 (218 aa).

Belongs to the nitroreductase family. The cofactor is FMN.

This chain is Putative NAD(P)H nitroreductase SH0546, found in Staphylococcus haemolyticus (strain JCSC1435).